The following is a 367-amino-acid chain: Mitochondrial distribution and morphology protein 34 (367 aa).

The 197-residue stretch at 1-197 (MSFNFTWPEF…LPSIIHRLSQ (197 aa)) folds into the SMP-LTD domain. Disordered stretches follow at residues 267–311 (QGLK…ALSS) and 347–367 (PAHR…FHLS). The segment covering 286–302 (FHTTSRVRVPSSLESNA) has biased composition (polar residues).

Belongs to the MDM34 family. As to quaternary structure, component of the ER-mitochondria encounter structure (ERMES) or MDM complex, composed of MMM1, MDM10, MDM12 and MDM34.

It is found in the mitochondrion outer membrane. In terms of biological role, component of the ERMES/MDM complex, which serves as a molecular tether to connect the endoplasmic reticulum (ER) and mitochondria. Components of this complex are involved in the control of mitochondrial shape and protein biogenesis, and function in nonvesicular lipid trafficking between the ER and mitochondria. MDM34 is required for the interaction of the ER-resident membrane protein MMM1 and the outer mitochondrial membrane-resident beta-barrel protein MDM10. The polypeptide is Mitochondrial distribution and morphology protein 34 (Malassezia globosa (strain ATCC MYA-4612 / CBS 7966) (Dandruff-associated fungus)).